Reading from the N-terminus, the 506-residue chain is RNA2 polyprotein (506 aa).

It belongs to the nepoviruses RNA2 polyprotein family. Post-translationally, specific enzymatic cleavages in vivo by the P1 encoded 3C-like protease yield mature proteins.

The protein localises to the host cell junction. It is found in the host plasmodesma. It localises to the virion. Its function is as follows. The movement protein is assembled into tubules that allow the transport of virions from cell to cell. The protein is RNA2 polyprotein of Beta vulgaris subsp. vulgaris (Beet).